A 1071-amino-acid polypeptide reads, in one-letter code: Methionine S-methyltransferase (1071 aa).

Alanine 2 bears the N-acetylalanine mark.

This sequence belongs to the class I-like SAM-binding methyltransferase superfamily. Homotetramer. As to expression, expressed in roots, rosette leaves and cauline leaves. Expressed at a lower level in developing seeds.

It is found in the cytoplasm. The enzyme catalyses L-methionine + S-adenosyl-L-methionine = S-methyl-L-methionine + S-adenosyl-L-homocysteine. Functionally, catalyzes the S-methylmethionine (SMM) biosynthesis from adenosyl-L-homocysteine (AdoMet) and methionine. SMM biosynthesis (by MMT1) and degradation (by HMT-1, HMT-2 and HMT-3) constitute the SMM cycle in plants, which is probably required to achieve short term control of AdoMet level. Also able to catalyze the selenium-methylmethionine (SeMM) from AdoMet and selenium-methionine (SeMet). May play a role in phoem sulfur transport; such function is however not essential. The sequence is that of Methionine S-methyltransferase (MMT1) from Arabidopsis thaliana (Mouse-ear cress).